Consider the following 275-residue polypeptide: MIQFTKMHGLGNDFMVVDGVTQNVFFSPEQIRRLADRNFGVGFDQLLLVEPPYDPDLDFHYRIFNADGGEVENCGNGARCFARFVRNKGLTNKNKIRVSTSAGKMTLRLERDGTVTVNMGVPVLDPSQIPFKAKKAEKTYLLQTSQQTFLCGAASMGNPHCVLDVEDVANANVAEIGALLTKHERFPRGVNVGFMQVVNSGHIKLRVYERGAAETLACGTGACAAVVVGQIQGKLDQQVRVDLPGGTLTINWEGEGKPLWMTGPAQHVYDGQIQL.

Residues N12, Q45, and N65 each contribute to the substrate site. The active-site Proton donor is the C74. Residues 75 to 76 (GN), N158, N191, and 209 to 210 (ER) contribute to the substrate site. Residue C218 is the Proton acceptor of the active site. Position 219 to 220 (219 to 220 (GT)) interacts with substrate.

It belongs to the diaminopimelate epimerase family. As to quaternary structure, homodimer.

The protein localises to the cytoplasm. The enzyme catalyses (2S,6S)-2,6-diaminopimelate = meso-2,6-diaminopimelate. Its pathway is amino-acid biosynthesis; L-lysine biosynthesis via DAP pathway; DL-2,6-diaminopimelate from LL-2,6-diaminopimelate: step 1/1. Its function is as follows. Catalyzes the stereoinversion of LL-2,6-diaminopimelate (L,L-DAP) to meso-diaminopimelate (meso-DAP), a precursor of L-lysine and an essential component of the bacterial peptidoglycan. The chain is Diaminopimelate epimerase from Shewanella sp. (strain MR-4).